The following is a 234-amino-acid chain: UPF0173 metal-dependent hydrolase Msp_0516 (234 aa).

The protein belongs to the UPF0173 family.

In Methanosphaera stadtmanae (strain ATCC 43021 / DSM 3091 / JCM 11832 / MCB-3), this protein is UPF0173 metal-dependent hydrolase Msp_0516.